A 652-amino-acid polypeptide reads, in one-letter code: Maternal embryonic leucine zipper kinase (652 aa).

The Protein kinase domain occupies 13-265 (YELHETIGTG…VKHLLSHPWL (253 aa)). ATP contacts are provided by residues 19-27 (IGTGGFAKV) and Lys-42. Asp-134 serves as the catalytic Proton acceptor. A Phosphothreonine; by autocatalysis modification is found at Thr-169. A Phosphoserine; by autocatalysis modification is found at Ser-173. A UBA-like region spans residues 284-323 (VDEDCVTELSVFYKCSRTSTSRLISEWNYDHITASYLLLH). Residues 328–652 (HGKPVRLKRP…VEDILSSCKV (325 aa)) form an autoinhibitory region region. Phosphothreonine occurs at positions 415, 450, 452, 482, and 484. Residues 443 to 492 (FLHPAPWTPTPRRKQNEKKGILTTPNKNSHTKEKNQSKETPTKKPITTGE) are disordered. Residues 472-484 (HTKEKNQSKETPT) show a composition bias toward basic and acidic residues. 3 positions are modified to phosphoserine: Ser-499, Ser-506, and Ser-518. The region spanning 603 to 652 (SDFGKVTMQFELEVCQLSKSEMVGIRRQRLKGDAWVYKRLVEDILSSCKV) is the KA1 domain.

The protein belongs to the protein kinase superfamily. CAMK Ser/Thr protein kinase family. SNF1 subfamily. Post-translationally, autophosphorylated: autophosphorylation of the T-loop at Thr-169 and Ser-173 is required for activation. Phosphorylated by the maturation promoting factor (MPF), composed of cdk1 and a cyclin-B. Also phosphorylated by some MAPK. Phosphorylated during oocyte maturation. Dephosphorylation destabilizes the protein. In terms of processing, degraded when cells exit mitosis.

It localises to the cell membrane. The catalysed reaction is L-seryl-[protein] + ATP = O-phospho-L-seryl-[protein] + ADP + H(+). The enzyme catalyses L-threonyl-[protein] + ATP = O-phospho-L-threonyl-[protein] + ADP + H(+). With respect to regulation, activated by autophosphorylation of the T-loop at Thr-169 and Ser-173: in contrast to other members of the SNF1 subfamily, phosphorylation at Thr-169 is not mediated by STK11/LKB1 but via autophosphorylation instead. In terms of biological role, serine/threonine-protein kinase involved in various processes such as cell cycle regulation, self-renewal of stem cells, apoptosis and splicing regulation. Also plays a role in primitive hematopoiesis, possibly by affecting the expression of genes critical for hematopoiesis. Plays a role in cytokinesis during early development. The chain is Maternal embryonic leucine zipper kinase (melk) from Xenopus tropicalis (Western clawed frog).